The primary structure comprises 364 residues: Carbamoyl phosphate synthase pyrimidine-specific small chain (364 aa).

A CPSase region spans residues 1–171; that stretch reads MKRRLVLENG…AYPSPGRGKR (171 aa). L-glutamine-binding residues include serine 45, glycine 219, and glycine 221. A Glutamine amidotransferase type-1 domain is found at 171 to 356; that stretch reads RIVLVDFGMK…IEMIETTEKE (186 aa). Cysteine 246 serves as the catalytic Nucleophile. Positions 247, 250, 288, 290, and 291 each coordinate L-glutamine. Residues histidine 329 and glutamate 331 contribute to the active site.

The protein belongs to the CarA family. In terms of assembly, composed of two chains; the small (or glutamine) chain promotes the hydrolysis of glutamine to ammonia, which is used by the large (or ammonia) chain to synthesize carbamoyl phosphate. Tetramer of heterodimers (alpha,beta)4. Interacts with BrxC.

The catalysed reaction is hydrogencarbonate + L-glutamine + 2 ATP + H2O = carbamoyl phosphate + L-glutamate + 2 ADP + phosphate + 2 H(+). The enzyme catalyses L-glutamine + H2O = L-glutamate + NH4(+). It participates in pyrimidine metabolism; UMP biosynthesis via de novo pathway; (S)-dihydroorotate from bicarbonate: step 1/3. Small subunit of the glutamine-dependent carbamoyl phosphate synthetase (CPSase). CPSase catalyzes the formation of carbamoyl phosphate from the ammonia moiety of glutamine, carbonate, and phosphate donated by ATP, constituting the first step of the biosynthetic pathway leading to arginine and/or urea. The small subunit (glutamine amidotransferase) binds and cleaves glutamine to supply the large subunit with the substrate ammonia. The chain is Carbamoyl phosphate synthase pyrimidine-specific small chain from Bacillus subtilis (strain 168).